We begin with the raw amino-acid sequence, 307 residues long: F-box protein At5g03100 (307 aa).

The F-box domain occupies 8-54 (VDFISSLPDEILHHILANTPTKLAIRTSVLSKRWKHVWYETPSISIV).

In Arabidopsis thaliana (Mouse-ear cress), this protein is F-box protein At5g03100.